Consider the following 492-residue polypeptide: Catalase (492 aa).

Residues His65 and Asn138 contribute to the active site. Heme is bound at residue Tyr348.

Belongs to the catalase family. As to quaternary structure, homotetramer. Heme serves as cofactor.

Its subcellular location is the cytoplasm. It localises to the cytosol. The protein resides in the peroxisome matrix. The catalysed reaction is 2 H2O2 = O2 + 2 H2O. Functionally, catalyzes the degradation of hydrogen peroxide (H(2)O(2)) generated by peroxisomal oxidases to water and oxygen, thereby protecting cells from the toxic effects of hydrogen peroxide. The polypeptide is Catalase (CATA) (Triticum aestivum (Wheat)).